We begin with the raw amino-acid sequence, 134 residues long: UPF0412 protein YaaI (134 aa).

The signal sequence occupies residues 1–23; it reads MKSVFTISASLAISLMLCCTAQA.

It belongs to the UPF0412 family.

The chain is UPF0412 protein YaaI from Escherichia coli (strain K12).